We begin with the raw amino-acid sequence, 378 residues long: Signal recognition particle receptor FtsY (378 aa).

GTP-binding positions include 184 to 191 (GVNGTGKT), 266 to 270 (DTAGR), and 330 to 333 (TKLD).

The protein belongs to the GTP-binding SRP family. FtsY subfamily. As to quaternary structure, part of the signal recognition particle protein translocation system, which is composed of SRP and FtsY. SRP is a ribonucleoprotein composed of Ffh and a 4.5S RNA molecule.

It localises to the cell membrane. It is found in the cytoplasm. It carries out the reaction GTP + H2O = GDP + phosphate + H(+). Its function is as follows. Involved in targeting and insertion of nascent membrane proteins into the cytoplasmic membrane. Acts as a receptor for the complex formed by the signal recognition particle (SRP) and the ribosome-nascent chain (RNC). Interaction with SRP-RNC leads to the transfer of the RNC complex to the Sec translocase for insertion into the membrane, the hydrolysis of GTP by both Ffh and FtsY, and the dissociation of the SRP-FtsY complex into the individual components. The protein is Signal recognition particle receptor FtsY of Buchnera aphidicola subsp. Acyrthosiphon pisum (strain APS) (Acyrthosiphon pisum symbiotic bacterium).